A 294-amino-acid polypeptide reads, in one-letter code: Casein kinase II subunit beta (294 aa).

Disordered regions lie at residues 66-90 (DHNT…SKRN) and 269-294 (KRME…MASE). Residues 70–87 (DNTTTNTSNNNDSRNGTS) are compositionally biased toward low complexity. The span at 273–288 (EDDEEEEDEVEEEDDD) shows a compositional bias: acidic residues.

This sequence belongs to the casein kinase 2 subunit beta family. Tetramer composed of two alpha chains, one beta chain and one beta' chain. In terms of processing, phosphorylated by alpha subunit.

Its function is as follows. Regulatory subunit of casein kinase II/CK2. As part of the kinase complex regulates the basal catalytic activity of the alpha subunit a constitutively active serine/threonine-protein kinase that phosphorylates a large number of substrates containing acidic residues C-terminal to the phosphorylated serine or threonine. The chain is Casein kinase II subunit beta (CKB1) from Candida albicans (Yeast).